Here is a 364-residue protein sequence, read N- to C-terminus: Alanine racemase (364 aa).

Lys-35 functions as the Proton acceptor; specific for D-alanine in the catalytic mechanism. An N6-(pyridoxal phosphate)lysine modification is found at Lys-35. Position 131 (Arg-131) interacts with substrate. Tyr-256 serves as the catalytic Proton acceptor; specific for L-alanine. Met-304 is a binding site for substrate.

This sequence belongs to the alanine racemase family. Pyridoxal 5'-phosphate is required as a cofactor.

The enzyme catalyses L-alanine = D-alanine. The protein operates within amino-acid biosynthesis; D-alanine biosynthesis; D-alanine from L-alanine: step 1/1. Catalyzes the interconversion of L-alanine and D-alanine. May also act on other amino acids. The sequence is that of Alanine racemase (alr) from Chromohalobacter salexigens (strain ATCC BAA-138 / DSM 3043 / CIP 106854 / NCIMB 13768 / 1H11).